Consider the following 542-residue polypeptide: CTP synthase (542 aa).

Positions methionine 1–leucine 265 are amidoligase domain. Serine 13 provides a ligand contact to CTP. Serine 13 serves as a coordination point for UTP. Residues serine 14 to isoleucine 19 and aspartate 71 contribute to the ATP site. Aspartate 71 and glutamate 139 together coordinate Mg(2+). CTP is bound by residues aspartate 146 to glutamate 148, lysine 186 to glutamine 191, and lysine 222. UTP contacts are provided by residues lysine 186–glutamine 191 and lysine 222. Residues threonine 290–lysine 541 enclose the Glutamine amidotransferase type-1 domain. Glycine 351 contributes to the L-glutamine binding site. Cysteine 378 acts as the Nucleophile; for glutamine hydrolysis in catalysis. L-glutamine contacts are provided by residues leucine 379–glutamine 382, glutamate 402, and arginine 469. Catalysis depends on residues histidine 514 and glutamate 516.

It belongs to the CTP synthase family. In terms of assembly, homotetramer.

It carries out the reaction UTP + L-glutamine + ATP + H2O = CTP + L-glutamate + ADP + phosphate + 2 H(+). It catalyses the reaction L-glutamine + H2O = L-glutamate + NH4(+). The enzyme catalyses UTP + NH4(+) + ATP = CTP + ADP + phosphate + 2 H(+). It participates in pyrimidine metabolism; CTP biosynthesis via de novo pathway; CTP from UDP: step 2/2. With respect to regulation, allosterically activated by GTP, when glutamine is the substrate; GTP has no effect on the reaction when ammonia is the substrate. The allosteric effector GTP functions by stabilizing the protein conformation that binds the tetrahedral intermediate(s) formed during glutamine hydrolysis. Inhibited by the product CTP, via allosteric rather than competitive inhibition. Functionally, catalyzes the ATP-dependent amination of UTP to CTP with either L-glutamine or ammonia as the source of nitrogen. Regulates intracellular CTP levels through interactions with the four ribonucleotide triphosphates. This is CTP synthase from Pseudomonas putida (strain GB-1).